The sequence spans 455 residues: Beta-1,3-galactosyl-O-glycosyl-glycoprotein beta-1,6-N-acetylglucosaminyltransferase 4 (455 aa).

Residues 1–13 lie on the Cytoplasmic side of the membrane; the sequence is MKIFRCCFKYTLQ. Residues 14 to 34 form a helical; Signal-anchor for type II membrane protein membrane-spanning segment; it reads QKLFILLLTLWLFSLLKLLNV. The Lumenal portion of the chain corresponds to 35-455; sequence GRLLFPQRDI…TEGTRQSHTL (421 aa). The N-linked (GlcNAc...) asparagine glycan is linked to Asn-73. Intrachain disulfides connect Cys-74/Cys-228, Cys-162/Cys-383, Cys-183/Cys-210, and Cys-392/Cys-424. 2 N-linked (GlcNAc...) asparagine glycosylation sites follow: Asn-287 and Asn-382.

This sequence belongs to the glycosyltransferase 14 family.

Its subcellular location is the golgi apparatus membrane. The enzyme catalyses a 3-O-[beta-D-galactosyl-(1-&gt;3)-N-acetyl-alpha-D-galactosaminyl]-L-seryl-[protein] + UDP-N-acetyl-alpha-D-glucosamine = 3-O-{beta-D-galactosyl-(1-&gt;3)-[N-acetyl-beta-D-glucosaminyl-(1-&gt;6)]-N-acetyl-alpha-D-galactosaminyl}-L-seryl-[protein] + UDP + H(+). It carries out the reaction a 3-O-[beta-D-galactosyl-(1-&gt;3)-N-acetyl-alpha-D-galactosaminyl]-L-threonyl-[protein] + UDP-N-acetyl-alpha-D-glucosamine = a 3-O-{beta-D-galactosyl-(1-&gt;3)-[N-acetyl-beta-D-glucosaminyl-(1-&gt;6)]-N-acetyl-alpha-D-galactosaminyl}-L-threonyl-[protein] + UDP + H(+). It functions in the pathway protein modification; protein glycosylation. Its function is as follows. Glycosyltransferase that mediates core 2 O-glycan branching, an important step in mucin-type biosynthesis. Does not have core 4 O-glycan or I-branching enzyme activity. This chain is Beta-1,3-galactosyl-O-glycosyl-glycoprotein beta-1,6-N-acetylglucosaminyltransferase 4 (Gcnt4), found in Mus musculus (Mouse).